The following is a 369-amino-acid chain: Secondary metabolism regulator laeA (369 aa).

The segment at 1-37 is disordered; the sequence is MFGNGQTGQRLPAMASPPHDSYYSQSLASSRSRNNSD. The segment covering 20-37 has biased composition (low complexity); that stretch reads DSYYSQSLASSRSRNNSD.

It belongs to the methyltransferase superfamily. LaeA methyltransferase family. As to quaternary structure, component of the heterotrimeric velvet complex composed of laeA, veA and velB; VeA acting as a bridging protein between laeA and velB. Interacts directly with veA.

The protein resides in the nucleus. It catalyses the reaction L-methionyl-[protein] + S-adenosyl-L-methionine = S-methyl-L-methionyl-[protein] + S-adenosyl-L-homocysteine. Functionally, methyltransferase that performs automethylation. No other methyl-accepting substrate has been identified yet. Component of the velvet transcription factor complex that acts as a global regulator for secondary metabolite gene expression. Required for aflR expression and subsequent aflatoxin production. Negatively regulates veA expression. Controls conidiophore and conidial development. Required for hydrophobin production which plays a role in cell surface hydrophobicity and host defense escape. The polypeptide is Secondary metabolism regulator laeA (Aspergillus flavus (strain ATCC 200026 / FGSC A1120 / IAM 13836 / NRRL 3357 / JCM 12722 / SRRC 167)).